A 398-amino-acid chain; its full sequence is Elongation factor Tu (398 aa).

The region spanning lysine 10–glutamate 208 is the tr-type G domain. Residues glycine 19–threonine 26 are G1. Glycine 19–threonine 26 lines the GTP pocket. Threonine 26 is a Mg(2+) binding site. The segment at glycine 61–alanine 65 is G2. The segment at aspartate 82–glycine 85 is G3. Residues aspartate 82–histidine 86 and asparagine 137–aspartate 140 contribute to the GTP site. Residues asparagine 137 to aspartate 140 are G4. Residues serine 175–leucine 177 are G5.

This sequence belongs to the TRAFAC class translation factor GTPase superfamily. Classic translation factor GTPase family. EF-Tu/EF-1A subfamily. As to quaternary structure, monomer.

The protein resides in the cytoplasm. It catalyses the reaction GTP + H2O = GDP + phosphate + H(+). Its function is as follows. GTP hydrolase that promotes the GTP-dependent binding of aminoacyl-tRNA to the A-site of ribosomes during protein biosynthesis. This is Elongation factor Tu from Marinobacter nauticus (strain ATCC 700491 / DSM 11845 / VT8) (Marinobacter aquaeolei).